We begin with the raw amino-acid sequence, 353 residues long: Photosystem II D2 protein (353 aa).

At T2 the chain carries N-acetylthreonine. Position 2 is a phosphothreonine (T2). The helical transmembrane segment at 41-61 threads the bilayer; sequence CAYFALGGWFTGTTFVTSWYT. H118 is a chlorophyll a binding site. Residues 125 to 141 traverse the membrane as a helical segment; it reads GFMLRQFELARSVQLRP. Residues Q130 and N143 each contribute to the pheophytin a site. The helical transmembrane segment at 153–166 threads the bilayer; that stretch reads VFVSVFLIYPLGQS. H198 contacts chlorophyll a. The helical transmembrane segment at 208 to 228 threads the bilayer; it reads AALLCAIHGATVENTLFEDGD. H215 and F262 together coordinate a plastoquinone. Position 215 (H215) interacts with Fe cation. H269 serves as a coordination point for Fe cation. The helical transmembrane segment at 279-295 threads the bilayer; the sequence is GLWMSALGVVGLALNLR.

The protein belongs to the reaction center PufL/M/PsbA/D family. In terms of assembly, PSII is composed of 1 copy each of membrane proteins PsbA, PsbB, PsbC, PsbD, PsbE, PsbF, PsbH, PsbI, PsbJ, PsbK, PsbL, PsbM, PsbT, PsbX, PsbY, PsbZ, Psb30/Ycf12, at least 3 peripheral proteins of the oxygen-evolving complex and a large number of cofactors. It forms dimeric complexes. The cofactor is The D1/D2 heterodimer binds P680, chlorophylls that are the primary electron donor of PSII, and subsequent electron acceptors. It shares a non-heme iron and each subunit binds pheophytin, quinone, additional chlorophylls, carotenoids and lipids. There is also a Cl(-1) ion associated with D1 and D2, which is required for oxygen evolution. The PSII complex binds additional chlorophylls, carotenoids and specific lipids..

The protein localises to the plastid. The protein resides in the chloroplast thylakoid membrane. The catalysed reaction is 2 a plastoquinone + 4 hnu + 2 H2O = 2 a plastoquinol + O2. Functionally, photosystem II (PSII) is a light-driven water:plastoquinone oxidoreductase that uses light energy to abstract electrons from H(2)O, generating O(2) and a proton gradient subsequently used for ATP formation. It consists of a core antenna complex that captures photons, and an electron transfer chain that converts photonic excitation into a charge separation. The D1/D2 (PsbA/PsbD) reaction center heterodimer binds P680, the primary electron donor of PSII as well as several subsequent electron acceptors. D2 is needed for assembly of a stable PSII complex. The chain is Photosystem II D2 protein from Dioscorea elephantipes (Elephant's foot yam).